The primary structure comprises 487 residues: Homoserine O-acetyltransferase (487 aa).

The AB hydrolase-1 domain maps to 45 to 352 (NVILVCHPLT…PHGHDGFLLE (308 aa)). Ser-150 acts as the Nucleophile in catalysis. Arg-219 lines the substrate pocket. Active-site residues include Asp-313 and His-346. Asp-347 lines the substrate pocket. CBS domains are found at residues 373–430 (MTNN…FQDL) and 434–487 (MTKD…EVLQ).

This sequence belongs to the AB hydrolase superfamily. MetX family. In terms of assembly, homodimer.

It localises to the cytoplasm. It carries out the reaction L-homoserine + acetyl-CoA = O-acetyl-L-homoserine + CoA. It functions in the pathway amino-acid biosynthesis; L-methionine biosynthesis via de novo pathway; O-acetyl-L-homoserine from L-homoserine: step 1/1. In terms of biological role, transfers an acetyl group from acetyl-CoA to L-homoserine, forming acetyl-L-homoserine. The polypeptide is Homoserine O-acetyltransferase (Methanocorpusculum labreanum (strain ATCC 43576 / DSM 4855 / Z)).